Consider the following 865-residue polypeptide: Alanine--tRNA ligase (865 aa).

The Zn(2+) site is built by histidine 554, histidine 558, cysteine 656, and histidine 660.

This sequence belongs to the class-II aminoacyl-tRNA synthetase family. The cofactor is Zn(2+).

It is found in the cytoplasm. The catalysed reaction is tRNA(Ala) + L-alanine + ATP = L-alanyl-tRNA(Ala) + AMP + diphosphate. Its function is as follows. Catalyzes the attachment of alanine to tRNA(Ala) in a two-step reaction: alanine is first activated by ATP to form Ala-AMP and then transferred to the acceptor end of tRNA(Ala). Also edits incorrectly charged Ser-tRNA(Ala) and Gly-tRNA(Ala) via its editing domain. The chain is Alanine--tRNA ligase from Francisella tularensis subsp. novicida (strain U112).